A 247-amino-acid polypeptide reads, in one-letter code: Probable transcriptional regulatory protein GAU_0635 (247 aa).

Belongs to the TACO1 family.

The protein localises to the cytoplasm. This Gemmatimonas aurantiaca (strain DSM 14586 / JCM 11422 / NBRC 100505 / T-27) protein is Probable transcriptional regulatory protein GAU_0635.